The following is a 519-amino-acid chain: Serine/threonine-protein kinase RIO1 (519 aa).

A compositionally biased stretch (pro residues) spans 1–10; that stretch reads MTPAPEPQDP. The tract at residues 1-54 is disordered; it reads MTPAPEPQDPPTIHEPVATEQTDDISDWDVESDYEDGYGAPSKSQAQGGASAAD. The segment covering 21–36 has biased composition (acidic residues); it reads QTDDISDWDVESDYED. Positions 39–53 are enriched in low complexity; the sequence is GAPSKSQAQGGASAA. Residues 122–519 form the Protein kinase domain; the sequence is SEIYGTISTG…KLVAANKKRK (398 aa). ATP contacts are provided by Lys154 and Leu228. Catalysis depends on Asp281, which acts as the Proton acceptor. Mg(2+) contacts are provided by Asn286 and Asp298. Asp298 acts as the 4-aspartylphosphate intermediate in catalysis. Residues 418–519 form a disordered region; it reads ADSKVPESTG…KLVAANKKRK (102 aa). Positions 439 to 464 are enriched in acidic residues; it reads GSEDEEGDEGESGEVESGDEEREEGE. The segment at 440-519 is association with (pre-)40S ribosomal particle; it reads SEDEEGDEGE…KLVAANKKRK (80 aa). Basic residues-rich tracts occupy residues 470 to 489 and 497 to 519; these read KKRPRGKKHLDKAEKHAHKM and EKRKEKMPKHVKKKLVAANKKRK.

Belongs to the protein kinase superfamily. RIO-type Ser/Thr kinase family. It depends on Mg(2+) as a cofactor. Autophosphorylated.

It is found in the cytoplasm. The catalysed reaction is L-seryl-[protein] + ATP = O-phospho-L-seryl-[protein] + ADP + H(+). It catalyses the reaction L-threonyl-[protein] + ATP = O-phospho-L-threonyl-[protein] + ADP + H(+). It carries out the reaction ATP + H2O = ADP + phosphate + H(+). Its function is as follows. Involved in the final steps of cytoplasmic maturation of the 40S ribosomal subunit. In vitro, has strong ATPase activity and only low protein kinase activity. This chain is Serine/threonine-protein kinase RIO1, found in Chaetomium thermophilum (strain DSM 1495 / CBS 144.50 / IMI 039719) (Thermochaetoides thermophila).